Reading from the N-terminus, the 248-residue chain is 2,3-bisphosphoglycerate-dependent phosphoglycerate mutase (248 aa).

Residues 8–15 (RHGESTWN), 21–22 (TG), Arg-60, 87–90 (ERHY), Lys-98, and 114–115 (RR) each bind substrate. Residue His-9 is the Tele-phosphohistidine intermediate of the active site. Glu-87 serves as the catalytic Proton donor/acceptor. Residues 117-137 (YDTPPPALEPTDPRASYDDPR) are disordered. Over residues 127 to 137 (TDPRASYDDPR) the composition is skewed to basic and acidic residues. Position 183-184 (183-184 (GN)) interacts with substrate.

The protein belongs to the phosphoglycerate mutase family. BPG-dependent PGAM subfamily. In terms of assembly, homodimer.

It carries out the reaction (2R)-2-phosphoglycerate = (2R)-3-phosphoglycerate. It functions in the pathway carbohydrate degradation; glycolysis; pyruvate from D-glyceraldehyde 3-phosphate: step 3/5. Functionally, catalyzes the interconversion of 2-phosphoglycerate and 3-phosphoglycerate. This chain is 2,3-bisphosphoglycerate-dependent phosphoglycerate mutase, found in Cupriavidus taiwanensis (strain DSM 17343 / BCRC 17206 / CCUG 44338 / CIP 107171 / LMG 19424 / R1) (Ralstonia taiwanensis (strain LMG 19424)).